A 324-amino-acid chain; its full sequence is Germination protease (324 aa).

A propeptide spanning residues 1–10 (MIIVLGIRTD) is cleaved from the precursor.

Belongs to the peptidase A25 family. In terms of assembly, homotetramer. Post-translationally, autoproteolytically processed. The inactive tetrameric zymogen termed p46 autoprocesses to a smaller form termed p41, which is active only during spore germination.

It carries out the reaction Endopeptidase action with P4 Glu or Asp, P1 preferably Glu &gt; Asp, P1' hydrophobic and P2' Ala.. Its function is as follows. Initiates the rapid degradation of small, acid-soluble proteins during spore germination. The protein is Germination protease of Caldanaerobacter subterraneus subsp. tengcongensis (strain DSM 15242 / JCM 11007 / NBRC 100824 / MB4) (Thermoanaerobacter tengcongensis).